We begin with the raw amino-acid sequence, 233 residues long: MKAICVLSGGLDSAVTSLVAKSENYDITTVTFNYGQMALNQEIKSAEKISEILNADHHVIDINFVKEFSKSGLNTGNIPEPEKEDLDDFEKSEKTMKAVWVPARNMIMFSIASGFAEGIDAEKIFSGLNREEGVTFPDNTPEFIERFNKSLEYGTLNKVKMVAPLYELNKPEIAKLGKELELKLDLEVIKYSYSCYRDNGEDYLHCGTCESCMRRKRAFKEAGIVDPTKYLVE.

Position 7-17 (7-17) interacts with ATP; sequence LSGGLDSAVTS. Positions 195, 206, 209, and 212 each coordinate Zn(2+).

This sequence belongs to the QueC family. Zn(2+) serves as cofactor.

It carries out the reaction 7-carboxy-7-deazaguanine + NH4(+) + ATP = 7-cyano-7-deazaguanine + ADP + phosphate + H2O + H(+). Its pathway is purine metabolism; 7-cyano-7-deazaguanine biosynthesis. Catalyzes the ATP-dependent conversion of 7-carboxy-7-deazaguanine (CDG) to 7-cyano-7-deazaguanine (preQ(0)). The chain is 7-cyano-7-deazaguanine synthase from Methanococcus maripaludis (strain C5 / ATCC BAA-1333).